The chain runs to 323 residues: tRNA dimethylallyltransferase (323 aa).

Gly21 to Ser28 serves as a coordination point for ATP. Thr23–Ser28 lines the substrate pocket. Interaction with substrate tRNA regions lie at residues Asp46 to Leu49, Gln171 to Arg175, and Arg252 to Arg257.

Belongs to the IPP transferase family. Monomer. It depends on Mg(2+) as a cofactor.

It carries out the reaction adenosine(37) in tRNA + dimethylallyl diphosphate = N(6)-dimethylallyladenosine(37) in tRNA + diphosphate. Functionally, catalyzes the transfer of a dimethylallyl group onto the adenine at position 37 in tRNAs that read codons beginning with uridine, leading to the formation of N6-(dimethylallyl)adenosine (i(6)A). The protein is tRNA dimethylallyltransferase of Buchnera aphidicola subsp. Baizongia pistaciae (strain Bp).